We begin with the raw amino-acid sequence, 317 residues long: Ribosomal RNA small subunit methyltransferase H (317 aa).

S-adenosyl-L-methionine is bound by residues 36–38 (GGH), Asp56, Phe80, Asp102, and Gln109.

It belongs to the methyltransferase superfamily. RsmH family.

Its subcellular location is the cytoplasm. The catalysed reaction is cytidine(1402) in 16S rRNA + S-adenosyl-L-methionine = N(4)-methylcytidine(1402) in 16S rRNA + S-adenosyl-L-homocysteine + H(+). Functionally, specifically methylates the N4 position of cytidine in position 1402 (C1402) of 16S rRNA. This is Ribosomal RNA small subunit methyltransferase H from Baumannia cicadellinicola subsp. Homalodisca coagulata.